The primary structure comprises 374 residues: Putative F-box protein At5g60060 (374 aa).

An F-box domain is found at 9–61; the sequence is SQWSDLPLDILELISDRLDHDSSDTIHLLCLRSVCATWRLSLPLSNKNNRLSK.

The protein is Putative F-box protein At5g60060 of Arabidopsis thaliana (Mouse-ear cress).